The sequence spans 423 residues: Histidine--tRNA ligase (423 aa).

This sequence belongs to the class-II aminoacyl-tRNA synthetase family. In terms of assembly, homodimer.

It is found in the cytoplasm. It catalyses the reaction tRNA(His) + L-histidine + ATP = L-histidyl-tRNA(His) + AMP + diphosphate + H(+). The sequence is that of Histidine--tRNA ligase from Geobacillus sp. (strain WCH70).